A 319-amino-acid chain; its full sequence is Sphingomyelinase D (319 aa).

The N-terminal stretch at 1–23 (MTPLLRTICAILCILIAVPLTFA) is a signal peptide. The active site involves His-44. Mg(2+)-binding residues include Glu-64, Asp-66, and Asp-109. An SMD-tail motif is present at residues 312–319 (ATGADKPW).

Belongs to the sphingomyelinase D/phospholipase D family. Mg(2+) serves as cofactor.

The protein resides in the secreted. It carries out the reaction a sphingomyelin + H2O = an N-acylsphing-4-enine 1-phosphate + choline + H(+). Its function is as follows. Catalyzes the hydrolysis of sphingomyelin. Sphingomyelinases D are produced by some spider in their venoms, but also by arthropods such as ticks, or pathogenic bacteria and fungi. They might play a role in pathogenicity through different mechanisms, such as membrane destabilization and host cell penetration, but also pulmonary inflammation and cutaneous lesions. This chain is Sphingomyelinase D, found in Ajellomyces capsulatus (strain G186AR / H82 / ATCC MYA-2454 / RMSCC 2432) (Darling's disease fungus).